We begin with the raw amino-acid sequence, 530 residues long: Calcium uptake protein 3, mitochondrial (530 aa).

The transit peptide at 1-43 (MAALRRLLWPPPRVSPPLCAHQPLLGPWGRPAVTTLGLPGRPF) directs the protein to the mitochondrion. The segment at 92–115 (GSPATGRPSKSAATEPEDPPRGRG) is disordered. Positions 232 to 267 (KPHAGFRIAFNMFDTDGNEMVDKKEFLVLQEIFRKK) constitute an EF-hand 1 domain. 6 residues coordinate Ca(2+): Asp-245, Asp-247, Asn-249, Met-251, Asp-253, and Glu-256. An EF-hand 2; degenerate domain is found at 401-436 (VENTSVFLENVRYSIPEEKGITFDEFRSFFQFLNNL). Positions 470-505 (FSPHLVNTVFKIFDVDKDDQLSYKEFIGIMKDRLHR) constitute an EF-hand 3 domain. Residues Asp-483, Asp-485, Asp-487, Gln-489, and Glu-494 each contribute to the Ca(2+) site.

This sequence belongs to the MICU1 family. MICU3 subfamily. In terms of assembly, heterodimer; disulfide-linked; heterodimerizes with MICU1. Component of the uniplex complex, composed of MCU, EMRE/SMDT1, MICU1 and MICU3 in a 4:4:1:1 stoichiometry. In terms of tissue distribution, specifically expressed in the central nervous system and skeletal muscle.

Its subcellular location is the mitochondrion intermembrane space. It is found in the mitochondrion inner membrane. Tissue-specific calcium sensor of the mitochondrial calcium uniporter (MCU) channel, which specifically regulates MCU channel activity in the central nervous system and skeletal muscle. Senses calcium level via its EF-hand domains: compared to MICU1 and MICU2, MICU3 has a higher affinity for calcium. MICU1 and MICU3 form a disulfide-linked heterodimer that stimulates and inhibits MCU activity, depending on the concentration of calcium. At low calcium levels, MICU1 occludes the pore of the MCU channel, preventing mitochondrial calcium uptake. At higher calcium levels, calcium-binding to MICU1 and MICU3 induces a conformational change that weakens MCU-MICU1 interactions and moves the MICU1-MICU3 heterodimer away from the pore, allowing calcium permeation through the MCU channel. The high calcium affinity of MICU3 lowers the calcium threshold necessary for calcium permeation through the MCU channel. The MICU1-MICU3 heterodimer promotes flexibility of neurotransmission in neuronal cells by enhancing mitochondrial calcium uptake in presynapses. It is also required to increase mitochondrial calcium uptake in skeletal muscle cells, thereby increasing ATP production. The polypeptide is Calcium uptake protein 3, mitochondrial (Homo sapiens (Human)).